Reading from the N-terminus, the 142-residue chain is Large ribosomal subunit protein uL11 (142 aa).

The protein belongs to the universal ribosomal protein uL11 family. In terms of assembly, part of the ribosomal stalk of the 50S ribosomal subunit. Interacts with L10 and the large rRNA to form the base of the stalk. L10 forms an elongated spine to which L12 dimers bind in a sequential fashion forming a multimeric L10(L12)X complex. Post-translationally, one or more lysine residues are methylated.

In terms of biological role, forms part of the ribosomal stalk which helps the ribosome interact with GTP-bound translation factors. In Histophilus somni (strain 129Pt) (Haemophilus somnus), this protein is Large ribosomal subunit protein uL11.